The primary structure comprises 308 residues: Pseudouridine-5'-phosphate glycosidase (308 aa).

The Proton donor role is filled by Glu-29. Residues Lys-90 and Val-110 each coordinate substrate. Mn(2+) is bound at residue Asp-142. Position 144-146 (144-146 (SSD)) interacts with substrate. The active-site Nucleophile is the Lys-163.

It belongs to the pseudouridine-5'-phosphate glycosidase family. As to quaternary structure, homotrimer. Requires Mn(2+) as cofactor.

It carries out the reaction D-ribose 5-phosphate + uracil = psi-UMP + H2O. Its function is as follows. Catalyzes the reversible cleavage of pseudouridine 5'-phosphate (PsiMP) to ribose 5-phosphate and uracil. Functions biologically in the cleavage direction, as part of a pseudouridine degradation pathway. The polypeptide is Pseudouridine-5'-phosphate glycosidase (Serratia proteamaculans (strain 568)).